We begin with the raw amino-acid sequence, 481 residues long: N-succinylglutamate 5-semialdehyde dehydrogenase (481 aa).

Residue 206-211 coordinates NAD(+); the sequence is GSARTG. Residues Glu-229 and Cys-263 contribute to the active site.

It belongs to the aldehyde dehydrogenase family. AstD subfamily.

The catalysed reaction is N-succinyl-L-glutamate 5-semialdehyde + NAD(+) + H2O = N-succinyl-L-glutamate + NADH + 2 H(+). The protein operates within amino-acid degradation; L-arginine degradation via AST pathway; L-glutamate and succinate from L-arginine: step 4/5. Catalyzes the NAD-dependent reduction of succinylglutamate semialdehyde into succinylglutamate. The protein is N-succinylglutamate 5-semialdehyde dehydrogenase of Sphingopyxis alaskensis (strain DSM 13593 / LMG 18877 / RB2256) (Sphingomonas alaskensis).